Reading from the N-terminus, the 168-residue chain is Signal peptidase I V (168 aa).

The Cytoplasmic segment spans residues 1-6 (MKKRFW). Residues 7 to 26 (FLAGVVSVVLAIQVKNAVFI) traverse the membrane as a helical segment. At 27–168 (DYKVEGVSMN…NIVGVISDAE (142 aa)) the chain is on the extracellular side. Catalysis depends on residues S34 and K75.

It belongs to the peptidase S26 family.

It localises to the cell membrane. The enzyme catalyses Cleavage of hydrophobic, N-terminal signal or leader sequences from secreted and periplasmic proteins.. The sequence is that of Signal peptidase I V (sipV) from Bacillus subtilis (strain 168).